Reading from the N-terminus, the 195-residue chain is Large ribosomal subunit protein uL18 (195 aa).

It belongs to the universal ribosomal protein uL18 family. Part of the 50S ribosomal subunit. Contacts the 5S and 23S rRNAs.

This is one of the proteins that bind and probably mediate the attachment of the 5S RNA into the large ribosomal subunit, where it forms part of the central protuberance. The protein is Large ribosomal subunit protein uL18 of Methanocaldococcus jannaschii (strain ATCC 43067 / DSM 2661 / JAL-1 / JCM 10045 / NBRC 100440) (Methanococcus jannaschii).